The primary structure comprises 430 residues: Trigger factor (430 aa).

Positions 157–242 constitute a PPIase FKBP-type domain; the sequence is GDLVALETWS…AVEVSEPVLP (86 aa).

The protein belongs to the FKBP-type PPIase family. Tig subfamily.

The protein resides in the cytoplasm. The enzyme catalyses [protein]-peptidylproline (omega=180) = [protein]-peptidylproline (omega=0). Functionally, involved in protein export. Acts as a chaperone by maintaining the newly synthesized protein in an open conformation. Functions as a peptidyl-prolyl cis-trans isomerase. This Xanthomonas oryzae pv. oryzae (strain MAFF 311018) protein is Trigger factor.